We begin with the raw amino-acid sequence, 253 residues long: Leucyl/phenylalanyl-tRNA--protein transferase (253 aa).

Belongs to the L/F-transferase family.

It localises to the cytoplasm. The enzyme catalyses N-terminal L-lysyl-[protein] + L-leucyl-tRNA(Leu) = N-terminal L-leucyl-L-lysyl-[protein] + tRNA(Leu) + H(+). The catalysed reaction is N-terminal L-arginyl-[protein] + L-leucyl-tRNA(Leu) = N-terminal L-leucyl-L-arginyl-[protein] + tRNA(Leu) + H(+). It catalyses the reaction L-phenylalanyl-tRNA(Phe) + an N-terminal L-alpha-aminoacyl-[protein] = an N-terminal L-phenylalanyl-L-alpha-aminoacyl-[protein] + tRNA(Phe). In terms of biological role, functions in the N-end rule pathway of protein degradation where it conjugates Leu, Phe and, less efficiently, Met from aminoacyl-tRNAs to the N-termini of proteins containing an N-terminal arginine or lysine. In Bordetella petrii (strain ATCC BAA-461 / DSM 12804 / CCUG 43448), this protein is Leucyl/phenylalanyl-tRNA--protein transferase.